A 714-amino-acid polypeptide reads, in one-letter code: T-cell activation Rho GTPase-activating protein (714 aa).

Residues 88–277 (QPLSIICGEN…FLIDNCFEIF (190 aa)) form the Rho-GAP domain. Disordered stretches follow at residues 290–357 (DDSL…ESSV), 370–419 (QDRR…AEDP), 451–508 (QGHI…HSMS), 520–563 (RTSS…QSQT), and 623–650 (KPST…HRLS). The segment covering 299–311 (SDVSTLQNDSAYD) has biased composition (polar residues). The residue at position 398 (Ser398) is a Phosphoserine. The span at 459–471 (SRSSPGESLGSSP) shows a compositional bias: low complexity. Basic and acidic residues-rich tracts occupy residues 492 to 501 (KTDKTKPQRE) and 527 to 545 (EKSK…RKES).

Highly expressed in testis.

Functionally, may function as a GTPase-activating protein. May play a role in transmission ratio distortion (TRD) in mouse, in which heterozygous males for t-locus transmit their t-carrying chromosome to 95% or more of their offspring. The polypeptide is T-cell activation Rho GTPase-activating protein (Tagap) (Mus musculus (Mouse)).